The chain runs to 341 residues: Alanine racemase (341 aa).

Catalysis depends on Lys33, which acts as the Proton acceptor; specific for D-alanine. Lys33 is subject to N6-(pyridoxal phosphate)lysine. Arg126 serves as a coordination point for substrate. Catalysis depends on Tyr236, which acts as the Proton acceptor; specific for L-alanine. Met284 is a binding site for substrate.

This sequence belongs to the alanine racemase family. Requires pyridoxal 5'-phosphate as cofactor.

The enzyme catalyses L-alanine = D-alanine. It functions in the pathway amino-acid biosynthesis; D-alanine biosynthesis; D-alanine from L-alanine: step 1/1. Catalyzes the interconversion of L-alanine and D-alanine. This Aquifex pyrophilus protein is Alanine racemase (alr).